Here is a 323-residue protein sequence, read N- to C-terminus: RNA polymerase II holoenzyme cyclin-like subunit (323 aa).

Residues 45 to 176 (DSKQNGIEQS…LLEELESYLI (132 aa)) form the Cyclin N-terminal domain.

Belongs to the cyclin family. Cyclin C subfamily. In terms of assembly, component of the SRB8-11 complex which consists of SRB8, SSN2/SRB9, SSN3/SRB10 and SSN8/SRB11. The SRB8-11 complex associates with the Mediator complex. The SSN3/SRB10 and SSN8/SRB11 kinase-cyclin pair also associate with the RNA polymerase II holoenzyme. Interacts with ASK10.

The protein resides in the nucleus. Functionally, component of the SRB8-11 complex. The SRB8-11 complex is a regulatory module of the Mediator complex which is itself involved in regulation of basal and activated RNA polymerase II-dependent transcription. The SRB8-11 complex may be involved in the transcriptional repression of a subset of genes regulated by Mediator. It may inhibit the association of the Mediator complex with RNA polymerase II to form the holoenzyme complex. The SRB8-11 complex phosphorylates the C-terminal domain (CTD) of the largest subunit of RNA polymerase II RPB1 at serines 2 and 5. The SSN3/SRB10 and SSN8/SRB11 kinase-cyclin pair may also positively and negatively regulate numerous transcriptional activators in response to changes in nutritional and physiological conditions. This chain is RNA polymerase II holoenzyme cyclin-like subunit (SSN8), found in Saccharomyces cerevisiae (strain ATCC 204508 / S288c) (Baker's yeast).